The sequence spans 602 residues: MTPLSSELVGFTIPFYSKTQKPYSNSSHGLLLSHNRSSLLTFSNSNPNNDNGRSFSSSGARNLQTTTTTDATLPTERRQQHSQSLGFRDTQMLKIFHRSCRSGNYIESLHLLETMVRKGYNPDVILCTKLIKGFFTLRNIPKAVRVMEILEKFGQPDVFAYNALINGFCKMNRIDDATRVLDRMRSKDFSPDTVTYNIMIGSLCSRGKLDLALKVLNQLLSDNCQPTVITYTILIEATMLEGGVDEALKLMDEMLSRGLKPDMFTYNTIIRGMCKEGMVDRAFEMVRNLELKGCEPDVISYNILLRALLNQGKWEEGEKLMTKMFSEKCDPNVVTYSILITTLCRDGKIEEAMNLLKLMKEKGLTPDAYSYDPLIAAFCREGRLDVAIEFLETMISDGCLPDIVNYNTVLATLCKNGKADQALEIFGKLGEVGCSPNSSSYNTMFSALWSSGDKIRALHMILEMMSNGIDPDEITYNSMISCLCREGMVDEAFELLVDMRSCEFHPSVVTYNIVLLGFCKAHRIEDAINVLESMVGNGCRPNETTYTVLIEGIGFAGYRAEAMELANDLVRIDAISEYSFKRLHRTFPLLNVLQRSSQTFGY.

The transit peptide at 1-78 directs the protein to the chloroplast; that stretch reads MTPLSSELVG…TDATLPTERR (78 aa). Positions 42–64 are enriched in polar residues; that stretch reads FSNSNPNNDNGRSFSSSGARNLQ. Positions 42 to 85 are disordered; sequence FSNSNPNNDNGRSFSSSGARNLQTTTTTDATLPTERRQQHSQSL. A compositionally biased stretch (low complexity) spans 65-74; it reads TTTTTDATLP. PPR repeat units lie at residues 88-122, 123-153, 157-191, 192-226, 227-261, 262-296, 297-331, 332-366, 367-401, 402-436, 437-471, 472-506, 507-541, and 542-576; these read RDTQ…GYNP, DVIL…LEKF, DVFA…DFSP, DTVT…NCQP, TVIT…GLKP, DMFT…GCEP, DVIS…KCDP, NVVT…GLTP, DAYS…GCLP, DIVN…GCSP, NSSS…GIDP, DEIT…EFHP, SVVT…GCRP, and NETT…DAIS.

Belongs to the PPR family. P subfamily.

The protein localises to the plastid. It localises to the chloroplast. The polypeptide is Pentatricopeptide repeat-containing protein At3g04760, chloroplastic (Arabidopsis thaliana (Mouse-ear cress)).